Here is a 29-residue protein sequence, read N- to C-terminus: Frontoxin VI (29 aa).

Cys-3 and Cys-24 are joined by a disulfide.

In terms of tissue distribution, expressed by the venom gland.

The protein resides in the secreted. Binds to muscle nicotinic acetylcholine receptor (nAChR) and inhibit acetylcholine from binding to the receptor, thereby impairing neuromuscular transmission. The chain is Frontoxin VI from Micrurus frontalis (Coral snake).